A 368-amino-acid polypeptide reads, in one-letter code: P2X receptor C (368 aa).

Residues 1–24 (MLDWDSILAYNTIKVVRIRDRRLG) lie on the Cytoplasmic side of the membrane. A helical membrane pass occupies residues 25–45 (ILHLIFMIAIISYVVIYSAII). The Lumenal segment spans residues 46–368 (KKGYLSIEEP…DKLYHNIEAL (323 aa)). The segment at 282–295 (RHAIRLIFIQTGVI) is pore-forming motif.

Belongs to the P2X receptor family.

Its subcellular location is the contractile vacuole membrane. Functionally, P2X receptors are ligand-gated ion channels that play a role in intracellular calcium signaling. ATP does not evoke inward currents in p2xC. Not essential for osmoregulation. The sequence is that of P2X receptor C (p2xC) from Dictyostelium discoideum (Social amoeba).